Reading from the N-terminus, the 306-residue chain is MQLNQVIVVHKAGDRQSKEWADRASRQLQQRGANVLVGPSGPKDNPYPVFMASVTEPIDLAVVLGGDGTSLAAARHLAAAGVPILAVNVGGHLGFLTEPLELFRDMEAVWDRLERDEYAMQQRMMLQAQVFEGSKAHPEAVGDRYYALNEMCIKPASADRMITAILEMEIDGDVVDQYQGDGLLVATPTGSTCYTVAANGPILHPGMEALVVTPICPLSLSSRPIVLPARSSVSIWPLEDHSLNTKLWMDGVLATSIWPGQRVQVTMADCQARFIILRDHYSFYQTLREKLAWAGARIPYHNNHRN.

The Proton acceptor role is filled by Asp67. NAD(+) is bound by residues Asp67 to Gly68, Asn149 to Glu150, and Asp181.

Belongs to the NAD kinase family. Requires a divalent metal cation as cofactor.

Its subcellular location is the cytoplasm. It carries out the reaction NAD(+) + ATP = ADP + NADP(+) + H(+). Involved in the regulation of the intracellular balance of NAD and NADP, and is a key enzyme in the biosynthesis of NADP. Catalyzes specifically the phosphorylation on 2'-hydroxyl of the adenosine moiety of NAD to yield NADP. The chain is NAD kinase 1 from Thermosynechococcus vestitus (strain NIES-2133 / IAM M-273 / BP-1).